Here is a 218-residue protein sequence, read N- to C-terminus: Urease accessory protein UreG (218 aa).

A GTP-binding site is contributed by 22-29 (GPVGSGKT).

This sequence belongs to the SIMIBI class G3E GTPase family. UreG subfamily. As to quaternary structure, homodimer. UreD, UreF and UreG form a complex that acts as a GTP-hydrolysis-dependent molecular chaperone, activating the urease apoprotein by helping to assemble the nickel containing metallocenter of UreC. The UreE protein probably delivers the nickel.

The protein localises to the cytoplasm. In terms of biological role, facilitates the functional incorporation of the urease nickel metallocenter. This process requires GTP hydrolysis, probably effectuated by UreG. This is Urease accessory protein UreG from Polaromonas sp. (strain JS666 / ATCC BAA-500).